A 713-amino-acid polypeptide reads, in one-letter code: Meiotic activator RIM4 (713 aa).

The segment at 1 to 90 (MKTEISTADS…TSTSTESRGR (90 aa)) is disordered. The span at 21–31 (ADSELVIREDI) shows a compositional bias: basic and acidic residues. Positions 50–71 (GEDSDTDSDNFLQDPEDDVDEE) are enriched in acidic residues. Residues 74-90 (GRGTVTTTSTSTESRGR) show a composition bias toward low complexity. The RRM 1 domain maps to 93–172 (SCIFVASLAA…RRLRCEPAKV (80 aa)). Residues 276–337 (HQNNGIINND…SDGIYDDEDK (62 aa)) form a disordered region. The segment covering 278 to 298 (NNGIINNDGSNNNDNNNSNNN) has biased composition (low complexity). Positions 299 to 327 (NREDSRRNGDVIEEECGHVHGSDSEEKLT) are enriched in basic and acidic residues. In terms of domain architecture, RRM 2 spans 346-420 (RSIFVGQLDK…KTMHVQYKEV (75 aa)). A disordered region spans residues 524-609 (KSMPNSWSSP…KRYARRSSYG (86 aa)). The residue at position 525 (Ser-525) is a Phosphoserine. Residues 526–546 (MPNSWSSPSSKSVNSENESVN) show a composition bias toward low complexity. A compositionally biased stretch (polar residues) spans 563–574 (GRYNAANSFTTY). Over residues 575–594 (NNSSAGNSNNNNNNNNSNSN) the composition is skewed to low complexity.

Polyubiquitinated by RSP5.

In terms of biological role, positive regulator of sporulation-specific genes and of sporulation. Required for premeiotic DNA synthesis and meiotic chromosomal segregation. May act in a nutritional signaling pathway. This Saccharomyces cerevisiae (strain ATCC 204508 / S288c) (Baker's yeast) protein is Meiotic activator RIM4 (RIM4).